We begin with the raw amino-acid sequence, 259 residues long: ATP synthase subunit a (259 aa).

Positions Met-1 to Thr-10 are cleaved as a propeptide — removed in mature form. 6 consecutive transmembrane segments (helical) span residues Leu-36–Leu-56, Trp-92–Ile-112, Leu-125–Tyr-145, Val-150–Ile-170, Ile-191–Ile-211, and Leu-216–Ile-236.

The protein belongs to the ATPase A chain family. In terms of assembly, F-type ATPases have 2 components, CF(1) - the catalytic core - and CF(0) - the membrane proton channel. In yeast, the dimeric form of ATP synthase consists of 17 polypeptides: alpha, beta, gamma, delta, epsilon, 4 (B), 5 (OSCP), 6 (A), 8, 9 (C), d, E (Tim11), f, g, h, i/j and k.

The protein localises to the mitochondrion inner membrane. In terms of biological role, mitochondrial membrane ATP synthase (F(1)F(0) ATP synthase or Complex V) produces ATP from ADP in the presence of a proton gradient across the membrane which is generated by electron transport complexes of the respiratory chain. F-type ATPases consist of two structural domains, F(1) - containing the extramembraneous catalytic core and F(0) - containing the membrane proton channel, linked together by a central stalk and a peripheral stalk. During catalysis, ATP synthesis in the catalytic domain of F(1) is coupled via a rotary mechanism of the central stalk subunits to proton translocation. Key component of the proton channel; it may play a direct role in the translocation of protons across the membrane. The polypeptide is ATP synthase subunit a (ATP6) (Saccharomyces cerevisiae (strain ATCC 204508 / S288c) (Baker's yeast)).